Reading from the N-terminus, the 242-residue chain is Orotidine 5'-phosphate decarboxylase (242 aa).

Residues D16, K37, 64–73 (DLKFHDIPNT), T128, R190, Q199, G219, and R220 contribute to the substrate site. K66 (proton donor) is an active-site residue.

Belongs to the OMP decarboxylase family. Type 1 subfamily. In terms of assembly, homodimer.

It carries out the reaction orotidine 5'-phosphate + H(+) = UMP + CO2. Its pathway is pyrimidine metabolism; UMP biosynthesis via de novo pathway; UMP from orotate: step 2/2. Catalyzes the decarboxylation of orotidine 5'-monophosphate (OMP) to uridine 5'-monophosphate (UMP). The sequence is that of Orotidine 5'-phosphate decarboxylase from Prochlorococcus marinus (strain MIT 9215).